A 239-amino-acid polypeptide reads, in one-letter code: Small ribosomal subunit protein uS3c (239 aa).

A KH type-2 domain is found at 43 to 139; it reads IKNYIQKNRK…RLNISIEKVK (97 aa). Residues 50–80 are disordered; sequence NRKKGSNRKIESDSSSEVITHNRKTDSGSSS.

Belongs to the universal ribosomal protein uS3 family. Part of the 30S ribosomal subunit.

It is found in the plastid. The protein resides in the chloroplast. The polypeptide is Small ribosomal subunit protein uS3c (rps3) (Agrostis stolonifera (Creeping bentgrass)).